The following is a 168-amino-acid chain: Putative postmeiotic segregation increased 2-like protein 3 (168 aa).

In terms of domain architecture, KRAB spans 8–84; it reads VSFKDVAVDF…EGEFPCQHSP (77 aa).

This sequence belongs to the DNA mismatch repair MutL/HexB family.

This Homo sapiens (Human) protein is Putative postmeiotic segregation increased 2-like protein 3 (PMS2P3).